The following is a 118-amino-acid chain: Probable FK506-binding protein (118 aa).

Residues 33 to 118 (GGEVEVHYVG…LVFIIDLISA (86 aa)) enclose the PPIase FKBP-type domain.

Belongs to the FKBP-type PPIase family.

It carries out the reaction [protein]-peptidylproline (omega=180) = [protein]-peptidylproline (omega=0). In terms of biological role, PPIases accelerate the folding of proteins. This Corynebacterium glutamicum (strain ATCC 13032 / DSM 20300 / JCM 1318 / BCRC 11384 / CCUG 27702 / LMG 3730 / NBRC 12168 / NCIMB 10025 / NRRL B-2784 / 534) protein is Probable FK506-binding protein.